Reading from the N-terminus, the 643-residue chain is 1-deoxy-D-xylulose-5-phosphate synthase (643 aa).

Residues histidine 71 and 112–114 contribute to the thiamine diphosphate site; that span reads SHA. Aspartate 144 lines the Mg(2+) pocket. Residues 145–146, asparagine 173, tyrosine 284, and glutamate 365 contribute to the thiamine diphosphate site; that span reads GA. Residue asparagine 173 participates in Mg(2+) binding.

Belongs to the transketolase family. DXPS subfamily. As to quaternary structure, homodimer. It depends on Mg(2+) as a cofactor. The cofactor is thiamine diphosphate.

It carries out the reaction D-glyceraldehyde 3-phosphate + pyruvate + H(+) = 1-deoxy-D-xylulose 5-phosphate + CO2. It participates in metabolic intermediate biosynthesis; 1-deoxy-D-xylulose 5-phosphate biosynthesis; 1-deoxy-D-xylulose 5-phosphate from D-glyceraldehyde 3-phosphate and pyruvate: step 1/1. Catalyzes the acyloin condensation reaction between C atoms 2 and 3 of pyruvate and glyceraldehyde 3-phosphate to yield 1-deoxy-D-xylulose-5-phosphate (DXP). The chain is 1-deoxy-D-xylulose-5-phosphate synthase from Mycobacterium leprae (strain Br4923).